The following is a 294-amino-acid chain: Probable 2-(5''-triphosphoribosyl)-3'-dephosphocoenzyme-A synthase (294 aa).

Belongs to the CitG/MdcB family.

It carries out the reaction 3'-dephospho-CoA + ATP = 2'-(5''-triphospho-alpha-D-ribosyl)-3'-dephospho-CoA + adenine. This chain is Probable 2-(5''-triphosphoribosyl)-3'-dephosphocoenzyme-A synthase, found in Streptococcus equi subsp. equi (strain 4047).